We begin with the raw amino-acid sequence, 1938 residues long: Myosin heavy chain, striated muscle (1938 aa).

Positions 29–79 (DGKKNCWVPDEKEGFASAEIQSSKGDEITVKIVADSSTRTVKKDDIQSMNP) constitute a Myosin N-terminal SH3-like domain. Residues 83–775 (EKLEDMANMT…VLGNLEEMRD (693 aa)) enclose the Myosin motor domain. 176–183 (GESGAGKT) contacts ATP. The segment at 653 to 675 (LNKLMKNLYSTHPHFVRCIIPNE) is actin-binding. One can recognise an IQ domain in the interval 778–805 (LSKIISMFQAHIRGYLIRKAYKKLQDQR). The interval 836–1938 (LLSIARQEEE…RSSVSVSASN (1103 aa)) is rodlike tail (S2 and LMM domains). The stretch at 836-1938 (LLSIARQEEE…RSSVSVSASN (1103 aa)) forms a coiled coil. Basic and acidic residues-rich tracts occupy residues 1041–1058 (VRGD…DLKS) and 1212–1225 (SKLE…KREM). 4 disordered regions span residues 1041–1062 (VRGD…TQEN), 1187–1332 (SALR…EVRN), 1344–1363 (LEEE…KANN), and 1898–1938 (HELE…SASN). Residues 1265-1285 (RSINELQSQKSRLQAENSDLT) are compositionally biased toward polar residues. Composition is skewed to basic and acidic residues over residues 1286–1303 (RQLE…KEKS), 1310–1332 (EDAR…EVRN), and 1344–1354 (LEEEQESKSDV). A compositionally biased stretch (low complexity) spans 1922–1938 (RSSVSVQRSSVSVSASN).

This sequence belongs to the TRAFAC class myosin-kinesin ATPase superfamily. Myosin family. As to quaternary structure, muscle myosin is a hexameric protein that consists of 2 heavy chain subunits (MHC), 2 alkali light chain subunits (MLC) and 2 regulatory light chain subunits (MLC-2).

It localises to the cytoplasm. The protein localises to the myofibril. Functionally, muscle contraction. Myosin is a protein that binds to F-actin and has ATPase activity that is activated by F-actin. This is Myosin heavy chain, striated muscle from Argopecten irradians (Bay scallop).